A 260-amino-acid chain; its full sequence is Large ribosomal subunit protein uL2 (260 aa).

The disordered stretch occupies residues 1–24; that stretch reads MGRVIRAQRKGAGSVFKSHTHHRK.

The protein belongs to the universal ribosomal protein uL2 family.

It is found in the cytoplasm. This is Large ribosomal subunit protein uL2 (RPL8) from Solanum lycopersicum (Tomato).